Here is a 1116-residue protein sequence, read N- to C-terminus: MAP kinase kinase kinase mkh1 (1116 aa).

Disordered stretches follow at residues 510-601 (LKMP…SNSL) and 618-647 (ALDE…ENHH). Low complexity predominate over residues 515–531 (NSGSSAPQSPSSNTSAS). Residues 553-569 (LRRKNTLTRRPSIRHAR) show a composition bias toward basic residues. Residues 588–601 (SFDPKASSKSSNSL) show a composition bias toward low complexity. Positions 634–647 (PKQSSSQVPKENHH) are enriched in polar residues. Residues 825–1094 (WMKGELIGNG…AEELLNHPFM (270 aa)) form the Protein kinase domain. Residues 831–839 (IGNGTYGKV) and Lys854 contribute to the ATP site. The active-site Proton acceptor is Asp955.

This sequence belongs to the protein kinase superfamily. STE Ser/Thr protein kinase family. MAP kinase kinase kinase subfamily.

It carries out the reaction L-seryl-[protein] + ATP = O-phospho-L-seryl-[protein] + ADP + H(+). The catalysed reaction is L-threonyl-[protein] + ATP = O-phospho-L-threonyl-[protein] + ADP + H(+). Functionally, may regulate cell morphology, cell wall integrity, salt resistance, cell cycle reentry from stationary-phase arrest, and filamentous growth in response to stress. Activates the MAP kinase kinase skh1/pek1 by phosphorylation. The polypeptide is MAP kinase kinase kinase mkh1 (mkh1) (Schizosaccharomyces pombe (strain 972 / ATCC 24843) (Fission yeast)).